We begin with the raw amino-acid sequence, 272 residues long: 3-methyl-2-oxobutanoate hydroxymethyltransferase (272 aa).

Residues D52 and D91 each contribute to the Mg(2+) site. 3-methyl-2-oxobutanoate contacts are provided by residues 52 to 53 (DS), D91, and K121. Position 123 (E123) interacts with Mg(2+). Catalysis depends on E190, which acts as the Proton acceptor.

It belongs to the PanB family. Homodecamer; pentamer of dimers. Mg(2+) serves as cofactor.

It is found in the cytoplasm. It catalyses the reaction 3-methyl-2-oxobutanoate + (6R)-5,10-methylene-5,6,7,8-tetrahydrofolate + H2O = 2-dehydropantoate + (6S)-5,6,7,8-tetrahydrofolate. Its pathway is cofactor biosynthesis; (R)-pantothenate biosynthesis; (R)-pantoate from 3-methyl-2-oxobutanoate: step 1/2. Catalyzes the reversible reaction in which hydroxymethyl group from 5,10-methylenetetrahydrofolate is transferred onto alpha-ketoisovalerate to form ketopantoate. The protein is 3-methyl-2-oxobutanoate hydroxymethyltransferase of Cytophaga hutchinsonii (strain ATCC 33406 / DSM 1761 / CIP 103989 / NBRC 15051 / NCIMB 9469 / D465).